Here is a 256-residue protein sequence, read N- to C-terminus: Probable ribosomal RNA small subunit methyltransferase A (256 aa).

H8, L10, G34, E55, D83, and N98 together coordinate S-adenosyl-L-methionine.

Belongs to the class I-like SAM-binding methyltransferase superfamily. rRNA adenine N(6)-methyltransferase family. RsmA subfamily.

The protein localises to the cytoplasm. Specifically dimethylates two adjacent adenosines in the loop of a conserved hairpin near the 3'-end of 16S rRNA in the 30S particle. May play a critical role in biogenesis of 30S subunits. The polypeptide is Probable ribosomal RNA small subunit methyltransferase A (Methanospirillum hungatei JF-1 (strain ATCC 27890 / DSM 864 / NBRC 100397 / JF-1)).